The chain runs to 99 residues: Small ribosomal subunit protein uS14m (99 aa).

The protein belongs to the universal ribosomal protein uS14 family.

Its subcellular location is the mitochondrion. This is Small ribosomal subunit protein uS14m (RPS14) from Oenothera berteroana (Bertero's evening primrose).